A 405-amino-acid polypeptide reads, in one-letter code: Arginine biosynthesis bifunctional protein ArgJ (405 aa).

Thr155, Lys181, Thr192, Glu278, Asn400, and Thr405 together coordinate substrate. The active-site Nucleophile is Thr192.

The protein belongs to the ArgJ family. As to quaternary structure, heterotetramer of two alpha and two beta chains.

It is found in the cytoplasm. The enzyme catalyses N(2)-acetyl-L-ornithine + L-glutamate = N-acetyl-L-glutamate + L-ornithine. It catalyses the reaction L-glutamate + acetyl-CoA = N-acetyl-L-glutamate + CoA + H(+). The protein operates within amino-acid biosynthesis; L-arginine biosynthesis; L-ornithine and N-acetyl-L-glutamate from L-glutamate and N(2)-acetyl-L-ornithine (cyclic): step 1/1. Its pathway is amino-acid biosynthesis; L-arginine biosynthesis; N(2)-acetyl-L-ornithine from L-glutamate: step 1/4. Functionally, catalyzes two activities which are involved in the cyclic version of arginine biosynthesis: the synthesis of N-acetylglutamate from glutamate and acetyl-CoA as the acetyl donor, and of ornithine by transacetylation between N(2)-acetylornithine and glutamate. The protein is Arginine biosynthesis bifunctional protein ArgJ of Dehalococcoides mccartyi (strain CBDB1).